A 505-amino-acid polypeptide reads, in one-letter code: Probable cytosol aminopeptidase (505 aa).

Mn(2+) contacts are provided by Lys-269 and Asp-274. Lys-281 is an active-site residue. Mn(2+)-binding residues include Asp-292, Asp-351, and Glu-353. The active site involves Arg-355.

The protein belongs to the peptidase M17 family. It depends on Mn(2+) as a cofactor.

It localises to the cytoplasm. The enzyme catalyses Release of an N-terminal amino acid, Xaa-|-Yaa-, in which Xaa is preferably Leu, but may be other amino acids including Pro although not Arg or Lys, and Yaa may be Pro. Amino acid amides and methyl esters are also readily hydrolyzed, but rates on arylamides are exceedingly low.. It catalyses the reaction Release of an N-terminal amino acid, preferentially leucine, but not glutamic or aspartic acids.. In terms of biological role, presumably involved in the processing and regular turnover of intracellular proteins. Catalyzes the removal of unsubstituted N-terminal amino acids from various peptides. The polypeptide is Probable cytosol aminopeptidase (Rhodococcus erythropolis (strain PR4 / NBRC 100887)).